We begin with the raw amino-acid sequence, 230 residues long: Modulator of macroautophagy TMEM150B-A (230 aa).

A topological domain (cytoplasmic) is located at residue M1. Residues 2-22 (WAWALLPICLTIWATAGIWIV) traverse the membrane as a helical segment. The Extracellular portion of the chain corresponds to 23–50 (YGMSVSNGSVNLSDGFPYISLCGTDPPQ). N-linked (GlcNAc...) asparagine glycans are attached at residues N29 and N33. The chain crosses the membrane as a helical span at residues 51 to 71 (SCVFGQVLNVGAMLGVWISAI). Over 72 to 83 (RFQQIRDYNCHS) the chain is Cytoplasmic. Residues 84-104 (VLNSVSLAMGILCALGTSIVG) form a helical membrane-spanning segment. At 105 to 115 (NFQQSNQLETH) the chain is on the extracellular side. Residues 116-136 (LAGAFLAFVIGNIYFWMQTAL) traverse the membrane as a helical segment. At 137 to 150 (TYMVKPTHGGCYIG) the chain is on the cytoplasmic side. The chain crosses the membrane as a helical span at residues 151-171 (PIRFCLSVACTALIVLMAVFL). Over 172–183 (KMNMKSISAICE) the chain is Extracellular. Residues 184–204 (WIVAMILFLLYGLFAVDFWHL) form a helical membrane-spanning segment. Residues 205-230 (DGHYFHVKKRTVIPNEMQVSTVTLSI) lie on the Cytoplasmic side of the membrane.

It belongs to the DRAM/TMEM150 family.

It is found in the cell membrane. The protein localises to the endosome membrane. It localises to the cytoplasmic vesicle. The protein resides in the autophagosome membrane. Functionally, modulator of macroautophagy that causes accumulation of autophagosomes under basal conditions and enhances autophagic flux. Represses cell death and promotes long-term clonogenic survival of cells grown in the absence of glucose in a macroautophagy-independent manner. May have some role in extracellular matrix engulfment or growth factor receptor recycling, both of which can modulate cell survival. The polypeptide is Modulator of macroautophagy TMEM150B-A (Xenopus laevis (African clawed frog)).